We begin with the raw amino-acid sequence, 256 residues long: Ubiquinone/menaquinone biosynthesis C-methyltransferase UbiE (256 aa).

Residues Thr79, Asp100, and Asp128–Ala129 each bind S-adenosyl-L-methionine.

Belongs to the class I-like SAM-binding methyltransferase superfamily. MenG/UbiE family.

It catalyses the reaction a 2-demethylmenaquinol + S-adenosyl-L-methionine = a menaquinol + S-adenosyl-L-homocysteine + H(+). The catalysed reaction is a 2-methoxy-6-(all-trans-polyprenyl)benzene-1,4-diol + S-adenosyl-L-methionine = a 5-methoxy-2-methyl-3-(all-trans-polyprenyl)benzene-1,4-diol + S-adenosyl-L-homocysteine + H(+). It participates in quinol/quinone metabolism; menaquinone biosynthesis; menaquinol from 1,4-dihydroxy-2-naphthoate: step 2/2. Its pathway is cofactor biosynthesis; ubiquinone biosynthesis. Methyltransferase required for the conversion of demethylmenaquinol (DMKH2) to menaquinol (MKH2) and the conversion of 2-polyprenyl-6-methoxy-1,4-benzoquinol (DDMQH2) to 2-polyprenyl-3-methyl-6-methoxy-1,4-benzoquinol (DMQH2). The sequence is that of Ubiquinone/menaquinone biosynthesis C-methyltransferase UbiE from Stutzerimonas stutzeri (strain A1501) (Pseudomonas stutzeri).